The chain runs to 1414 residues: MRDLVKQLKSEKHTAEFDALRIKLASPEEVRSWSYGEVKKPETINYRTFKPEREGLFCAKIFGPIKDYECLCGKYKRLKHRGVICEKCGVEVTLAKVRRERMGHIELASPVAHIWYLKSLPSRIGLLLDVTLRDIERILYFEAYVVVDPGMTDLEPRQLLSEEAYLDALEEYGDDFTALMGAEAIQRLLRDIDVEAEVEALRTELQTTTSETKTKKLTKRLKVLSAFLESGNKPEWMILTVLPVLPPDLRPLVPLDGGRFATSDLNDLYRRVINRNNRLKRLLDLNAPDIIVRNEKRMLQEAVDALLDNGRRGRAILGSNRRQLKSLADMIKGKSGRFRQNLLGKRVDYSGRSVIVVGPTLKLHQAGLPKKMALELFKPFIFSKLQLRGLATTVKAAKKLVENEGPEVWDILEEVIREHPILLNRAPTLHRLGIQAFEPVLVEGKAIQLHPLVCTAYNADFDGDQMAVHVPLTLEAQLEARSLMMSTNNVLHPANGEPIIVPSQDVVLGLYYITRDRVNAKGEGMRFADAQEVVRAYENDQVDLHARITVRIKEGILNEAGEIEESDRLVNTAAGRILLWQIVPKGLPFALVDQPMTKKAVTKLLDFCYRNLGLKTTVIFADKLMYMGFHYATHSGVSIGINDLVVPDQKEAIISRAEDEVREIEKQYASGLVTHGERRNKVIDIWSRTNDQVAKAMMEKIAVEKVKDAEGKEVAQSSFNSIYMMSDSGARGSAAQTRQLAGMRGLMARPDGTIIETPITANFREGLNVLQYFISTHGARKGLADTALKTANSGYLTRRLVDVAQDLVVTEHDCGTEASIEMMPHIEGGDVVEPLRERVLGRILAEPVMDPKSRKELLAKDTFLDERRVDILEEHSIDRVRVRSAITCEARYGICSMCYGRDLARGHVVNVGEAIGVVAAQSIGEPGTQLTMRTFHIGGAASRATAANNIEVKSTGKIKLRNLKTVEQAQGNLVAVSRSGELVVQDLQGSEREHYKVPYGATISVRDGDSVKAGQIVAQWDPHTHPIITEVAGTLRFVDLVDGVTMNRQTDELTGLSSIVITSTKQRSASGKELRPMVKLVDKNDDDLFLPGGKVPAHYFLPEGTFLTKEDGTTVNIGDVLARIPQETSKTRDITGGLPRVADLFEARRPKDAAILAEISGVVSFGKDTKDKGRLIITAPDGTTHEELIPKWRHVSVFEGETVEKGEVIADGPRDPHDILRLLGVNALANYIVNEVQEVYRLQGVKINDKHIEVIVRQMLRKVKITQPGDTDLLQNEQVERTRVREENEKIIKKDGTVAKVEPILLGITKASLATESFISAASFQETTRVLTAASVAGKRDDLRGLKENVIVGRLIPAGTGFSYHQQRRAVAGKSVEEKEIEEKRVTASEAEQALSEALKSSAPQEAKAAQKDE.

Zn(2+) is bound by residues cysteine 70, cysteine 72, cysteine 85, and cysteine 88. Residues aspartate 460, aspartate 462, and aspartate 464 each contribute to the Mg(2+) site. Residues cysteine 814, cysteine 888, cysteine 895, and cysteine 898 each contribute to the Zn(2+) site. Residues 1392–1403 (EQALSEALKSSA) are compositionally biased toward low complexity. A disordered region spans residues 1392 to 1414 (EQALSEALKSSAPQEAKAAQKDE).

Belongs to the RNA polymerase beta' chain family. In terms of assembly, the RNAP catalytic core consists of 2 alpha, 1 beta, 1 beta' and 1 omega subunit. When a sigma factor is associated with the core the holoenzyme is formed, which can initiate transcription. Mg(2+) serves as cofactor. Requires Zn(2+) as cofactor.

It carries out the reaction RNA(n) + a ribonucleoside 5'-triphosphate = RNA(n+1) + diphosphate. DNA-dependent RNA polymerase catalyzes the transcription of DNA into RNA using the four ribonucleoside triphosphates as substrates. This chain is DNA-directed RNA polymerase subunit beta', found in Coxiella burnetii (strain Dugway 5J108-111).